A 1175-amino-acid polypeptide reads, in one-letter code: Double-stranded RNA-specific adenosine deaminase (1175 aa).

2 positions are modified to asymmetric dimethylarginine: R30 and R42. The Z-binding 1 domain occupies 135 to 201 (LSISQNPEQK…GKPPLWSLVP (67 aa)). Residues 135–204 (LSISQNPEQK…PLWSLVPLSQ (70 aa)) form an interaction with Z-DNA region. Residues 207–239 (TQPPRAVNSDKEVPRGEPDLDSEDGDPASDLEG) form a disordered region. Residues 214 to 224 (NSDKEVPRGEP) are compositionally biased toward basic and acidic residues. Over residues 225 to 235 (DLDSEDGDPAS) the composition is skewed to acidic residues. S228 and S235 each carry phosphoserine. Residues 243–307 (LLDMAEIKEK…ATPPIWYLTD (65 aa)) form the Z-binding 2 domain. The segment at 315–384 (MKRSTHSGPA…ARPGPVRLRP (70 aa)) is disordered. The span at 357-376 (KRVENGQEPVTKYESRHEAR) shows a compositional bias: basic and acidic residues. A Glycyl lysine isopeptide (Lys-Gly) (interchain with G-Cter in SUMO); alternate cross-link involves residue K368. K368 is covalently cross-linked (Glycyl lysine isopeptide (Lys-Gly) (interchain with G-Cter in SUMO1); alternate). A Glycyl lysine isopeptide (Lys-Gly) (interchain with G-Cter in SUMO2); alternate cross-link involves residue K368. S431 carries the phosphoserine modification. Residues 453–521 (NPVSGLLEYA…AVKAMAILLR (69 aa)) form the DRBM 1 domain. The interval 524–561 (KAKDSGQPEELSNCPMEEDPEKPAESQPPSSSATSLFS) is disordered. The span at 550–561 (QPPSSSATSLFS) shows a compositional bias: polar residues. Phosphoserine occurs at positions 564, 579, and 586. Positions 564-632 (SPVTTLLECM…AEEAMKALQE (69 aa)) constitute a DRBM 2 domain. The segment at 632 to 652 (EEAANSADDQSGGANTDSLDE) is disordered. The span at 638 to 648 (ADDQSGGANTD) shows a compositional bias: polar residues. The segment at 662–671 (IGELVRYLNT) is N-terminal extension of DRBM 3 and constituent of a bi-partite nuclear localization signal. Residues 672 to 740 (NPVGGLLEYA…ADAALRVLIG (69 aa)) form the DRBM 3 domain. Residues 741 to 747 (ESEKAEQ) are C-terminal extension of DRBM 3 and constituent of a bi-partite nuclear localization signal. Phosphothreonine is present on T754. A phosphoserine mark is found at S760, S769, and S771. K821 is covalently cross-linked (Glycyl lysine isopeptide (Lys-Gly) (interchain with G-Cter in SUMO2)). Residues 832-1167 (SLGTGNRCVK…ISKPQEEKNF (336 aa)) enclose the A to I editase domain. H856 is a Zn(2+) binding site. Residue E858 is the Proton donor of the active site. Positions 912 and 982 each coordinate Zn(2+).

Homodimer. Homodimerization is essential for its catalytic activity. Isoform 5 can form heterodimers with ADARB1/ADAR2. Isoform 1 interacts with ILF2/NF45 and ILF3/NF90. Binding to ILF3/NF90 up-regulates ILF3-mediated gene expression. Isoform 1 and isoform 5 (via DRBM 3 domain) interact with TNPO1. Isoform 5 (via DRBM domains) interacts with XPO5. Isoform 1 and isoform 5 can interact with EIF2AK2/PKR and UPF1. Post-translationally, sumoylation reduces RNA-editing activity. As to expression, detected in brain.

The protein resides in the cytoplasm. The protein localises to the nucleus. It carries out the reaction adenosine in double-stranded RNA + H2O + H(+) = inosine in double-stranded RNA + NH4(+). In terms of biological role, catalyzes the hydrolytic deamination of adenosine to inosine in double-stranded RNA (dsRNA) referred to as A-to-I RNA editing. This may affect gene expression and function in a number of ways that include mRNA translation by changing codons and hence the amino acid sequence of proteins; pre-mRNA splicing by altering splice site recognition sequences; RNA stability by changing sequences involved in nuclease recognition; genetic stability in the case of RNA virus genomes by changing sequences during viral RNA replication; and RNA structure-dependent activities such as microRNA production or targeting or protein-RNA interactions. Can edit both viral and cellular RNAs and can edit RNAs at multiple sites (hyper-editing) or at specific sites (site-specific editing). Its cellular RNA substrates include: bladder cancer-associated protein (BLCAP), neurotransmitter receptors for glutamate (GRIA2) and serotonin (HTR2C) and GABA receptor (GABRA3). Site-specific RNA editing of transcripts encoding these proteins results in amino acid substitutions which consequently alters their functional activities. Exhibits low-level editing at the GRIA2 Q/R site, but edits efficiently at the R/G site and HOTSPOT1. Does not affect polyomavirus replication but provides protection against virus-induced cytopathic effects. Essential for embryonic development and cell survival and plays a critical role in the maintenance of hematopoietic stem cells. The chain is Double-stranded RNA-specific adenosine deaminase (Adar) from Rattus norvegicus (Rat).